The primary structure comprises 435 residues: Serine/threonine-protein kinase 40 (435 aa).

The 298-residue stretch at 35–332 (FILGPRLGNS…DVLEALSAII (298 aa)) folds into the Protein kinase domain. ATP contacts are provided by residues 41-49 (LGNSPVPSI) and lysine 66. Residue aspartate 197 is the Proton acceptor of the active site.

This sequence belongs to the protein kinase superfamily. CAMK Ser/Thr protein kinase family.

The protein resides in the nucleus. It localises to the cytoplasm. It catalyses the reaction L-seryl-[protein] + ATP = O-phospho-L-seryl-[protein] + ADP + H(+). It carries out the reaction L-threonyl-[protein] + ATP = O-phospho-L-threonyl-[protein] + ADP + H(+). May be a negative regulator of NF-kappa-B and p53-mediated gene transcription. In Rattus norvegicus (Rat), this protein is Serine/threonine-protein kinase 40 (Stk40).